The chain runs to 431 residues: Glucose-1-phosphate adenylyltransferase (431 aa).

Residue Lys39 participates in beta-D-fructose 1,6-bisphosphate binding. AMP is bound by residues Arg40, His46, and Arg52. Residue Tyr114 participates in alpha-D-glucose 1-phosphate binding. AMP is bound at residue Arg130. Alpha-D-glucose 1-phosphate-binding positions include Gly179, 194 to 195, and Ser212; that span reads EK. Residues Glu370 and Arg386 each contribute to the AMP site. Beta-D-fructose 1,6-bisphosphate contacts are provided by residues 419–423 and 429–431; these read REMLR and QER.

The protein belongs to the bacterial/plant glucose-1-phosphate adenylyltransferase family. As to quaternary structure, homotetramer.

The enzyme catalyses alpha-D-glucose 1-phosphate + ATP + H(+) = ADP-alpha-D-glucose + diphosphate. It functions in the pathway glycan biosynthesis; glycogen biosynthesis. With respect to regulation, allosterically activated by fructose-1,6-bisphosphate (F16BP) and inhibited by AMP. In terms of biological role, involved in the biosynthesis of ADP-glucose, a building block required for the elongation reactions to produce glycogen. Catalyzes the reaction between ATP and alpha-D-glucose 1-phosphate (G1P) to produce pyrophosphate and ADP-Glc. The chain is Glucose-1-phosphate adenylyltransferase from Shigella dysenteriae serotype 1 (strain Sd197).